Here is a 93-residue protein sequence, read N- to C-terminus: Acylphosphatase (93 aa).

An Acylphosphatase-like domain is found at 7–93 (RLTAWVHGWV…TEQITGFSER (87 aa)). Catalysis depends on residues arginine 22 and asparagine 40.

It belongs to the acylphosphatase family.

It catalyses the reaction an acyl phosphate + H2O = a carboxylate + phosphate + H(+). This chain is Acylphosphatase (acyP), found in Mycobacterium tuberculosis (strain ATCC 25177 / H37Ra).